We begin with the raw amino-acid sequence, 88 residues long: Small ribosomal subunit protein uS19 (88 aa).

Belongs to the universal ribosomal protein uS19 family.

Protein S19 forms a complex with S13 that binds strongly to the 16S ribosomal RNA. In Mycoplasma capricolum subsp. capricolum (strain California kid / ATCC 27343 / NCTC 10154), this protein is Small ribosomal subunit protein uS19 (rpsS).